The following is a 429-amino-acid chain: Histidine--tRNA ligase (429 aa).

The protein belongs to the class-II aminoacyl-tRNA synthetase family. As to quaternary structure, homodimer.

It localises to the cytoplasm. The catalysed reaction is tRNA(His) + L-histidine + ATP = L-histidyl-tRNA(His) + AMP + diphosphate + H(+). This chain is Histidine--tRNA ligase, found in Corynebacterium efficiens (strain DSM 44549 / YS-314 / AJ 12310 / JCM 11189 / NBRC 100395).